The sequence spans 242 residues: Arginine transport ATP-binding protein ArtP (242 aa).

The ABC transporter domain occupies 3 to 241 (IQLNGINCFY…QTEAFKNYLS (239 aa)). 35–42 (GPSGAGKS) serves as a coordination point for ATP.

It belongs to the ABC transporter superfamily. As to quaternary structure, the complex is composed of two ATP-binding proteins (ArtP), two transmembrane proteins (ArtM and ArtQ) and two solute-binding proteins (ArtJ and ArtI).

It localises to the cell inner membrane. The catalysed reaction is a polar amino acid(out) + ATP + H2O = a polar amino acid(in) + ADP + phosphate + H(+). The enzyme catalyses L-arginine(out) + ATP + H2O = L-arginine(in) + ADP + phosphate + H(+). Part of the ABC transporter complex ArtPIQMJ involved in arginine transport. Probably responsible for energy coupling to the transport system. The sequence is that of Arginine transport ATP-binding protein ArtP (artP) from Escherichia coli O157:H7.